Consider the following 268-residue polypeptide: Exopolysaccharide production negative regulator (268 aa).

A signal peptide spans 1 to 22 (MRAGELKSLRVAVLGMSLAVGA).

Functionally, negatively modulates exopolysaccharide (EPS) biosynthesis. The sequence is that of Exopolysaccharide production negative regulator (exoR) from Rhizobium meliloti (strain 1021) (Ensifer meliloti).